A 480-amino-acid chain; its full sequence is Thyroid receptor-interacting protein 6 (480 aa).

The segment covering 1–12 has biased composition (pro residues); the sequence is MSGPTWLPPKQP. A disordered region spans residues 1–43; that stretch reads MSGPTWLPPKQPEPSRLPQGRSLPRGALGPPTAHGATLQPHPR. Arg-25 is modified (asymmetric dimethylarginine; alternate). Arg-25 carries the post-translational modification Omega-N-methylarginine; alternate. The residue at position 55 (Tyr-55) is a Phosphotyrosine; by SRC. Residues 57–84 are disordered; that stretch reads PPGVPEDRGPTWVGSHGTPQRLQGLPPD. Ser-92 carries the post-translational modification Phosphoserine. Residues 107-134 are disordered; sequence LDGGRSHAPRRPDRQAFEAPPPHAYRGG. Over residues 108-122 the composition is skewed to basic and acidic residues; that stretch reads DGGRSHAPRRPDRQA. An omega-N-methylarginine mark is found at Arg-111, Arg-183, and Arg-190. Ser-193 is subject to Phosphoserine. Omega-N-methylarginine is present on residues Arg-209 and Arg-242. Positions 218-257 are disordered; that stretch reads RSHREPGPGVPEGPSGVHIPAGGGRGGGHEPQGPLGQPPE. Positions 238 to 247 are enriched in gly residues; the sequence is AGGGRGGGHE. 3 consecutive LIM zinc-binding domains span residues 281 to 339, 341 to 401, and 404 to 471; these read GRCG…YVAT, EKCS…KFAP, and SVCG…RIQE. The interaction with MAGI1 and PTPN13 stretch occupies residues 473 to 480; sequence SATVTTDC.

Belongs to the zyxin/ajuba family. As to quaternary structure, specifically interacts with the ligand binding domain of the thyroid receptor (TR) in the presence of thyroid hormone. Interacts (via the third LIM domain and C-terminus) with PTPN13 (via the second PDZ domain). Interacts (via the second LIM domain or via the third LIM domain plus C-terminus) with PDLIM4 (via PDZ domain). Found in a complex with PTPN13 and PDLIM4. Interacts with SVIL isoform 2. Interacts with LPAR2 but not other LPA receptors. Interacts with PRKAA2. Interacts with MAGI1. Interacts with SCRIB. In case of infection, interacts with S.typhimurium protein sseI. Post-translationally, phosphorylation at Tyr-55 by SRC is required for enhancement of lysophosphatidic acid-induced cell migration. Tyr-55 is dephosphorylated by PTPN13. In terms of tissue distribution, highly expressed in kidney, stomach, lung, heart and testis. Low expression levels in brain, colon, thymus, pancreas and skin. Not expressed in skeletal muscle.

Its subcellular location is the cytoplasm. The protein resides in the cytoskeleton. It localises to the cell junction. It is found in the focal adhesion. The protein localises to the nucleus. Relays signals from the cell surface to the nucleus to weaken adherens junction and promote actin cytoskeleton reorganization and cell invasiveness. Involved in lysophosphatidic acid-induced cell adhesion and migration. Acts as a transcriptional coactivator for NF-kappa-B and JUN, and mediates the transrepression of these transcription factors induced by glucocorticoid receptor. This Mus musculus (Mouse) protein is Thyroid receptor-interacting protein 6 (Trip6).